Here is a 234-residue protein sequence, read N- to C-terminus: Large ribosomal subunit protein uL1 (234 aa).

It belongs to the universal ribosomal protein uL1 family. In terms of assembly, part of the 50S ribosomal subunit.

In terms of biological role, binds directly to 23S rRNA. The L1 stalk is quite mobile in the ribosome, and is involved in E site tRNA release. Its function is as follows. Protein L1 is also a translational repressor protein, it controls the translation of the L11 operon by binding to its mRNA. This chain is Large ribosomal subunit protein uL1, found in Aliivibrio fischeri (strain ATCC 700601 / ES114) (Vibrio fischeri).